We begin with the raw amino-acid sequence, 917 residues long: DNA mismatch repair protein spellchecker 1 (917 aa).

Residue 667-674 coordinates ATP; sequence GPNMGGKS.

The protein belongs to the DNA mismatch repair MutS family. In terms of assembly, heterodimer of Msh2/Spel and Msh6.

Its subcellular location is the nucleus. Functionally, involved in postreplication mismatch repair. Binds specifically to DNA containing mismatched nucleotides thus providing a target for the excision repair processes characteristic of postreplication mismatch repair. The chain is DNA mismatch repair protein spellchecker 1 (spel1) from Drosophila melanogaster (Fruit fly).